Reading from the N-terminus, the 228-residue chain is Dolichyl-phosphate hexose transferase HVO_1613 (228 aa).

This sequence belongs to the glycosyltransferase 2 family.

Glycosyltransferase that adds a monosaccharide to dolichol phosphate, thereby being responsible for generating one of the three monosaccharide-modified dolichol phosphates. The subunit onto which additional sugars are added is not known. This Haloferax volcanii (strain ATCC 29605 / DSM 3757 / JCM 8879 / NBRC 14742 / NCIMB 2012 / VKM B-1768 / DS2) (Halobacterium volcanii) protein is Dolichyl-phosphate hexose transferase HVO_1613.